The following is a 530-amino-acid chain: Bifunctional purine biosynthesis protein PurH (530 aa).

The MGS-like domain maps to 1–148; sequence MNNPRPIRRA…KNHKDVTIVV (148 aa).

Belongs to the PurH family.

It catalyses the reaction (6R)-10-formyltetrahydrofolate + 5-amino-1-(5-phospho-beta-D-ribosyl)imidazole-4-carboxamide = 5-formamido-1-(5-phospho-D-ribosyl)imidazole-4-carboxamide + (6S)-5,6,7,8-tetrahydrofolate. The enzyme catalyses IMP + H2O = 5-formamido-1-(5-phospho-D-ribosyl)imidazole-4-carboxamide. It functions in the pathway purine metabolism; IMP biosynthesis via de novo pathway; 5-formamido-1-(5-phospho-D-ribosyl)imidazole-4-carboxamide from 5-amino-1-(5-phospho-D-ribosyl)imidazole-4-carboxamide (10-formyl THF route): step 1/1. The protein operates within purine metabolism; IMP biosynthesis via de novo pathway; IMP from 5-formamido-1-(5-phospho-D-ribosyl)imidazole-4-carboxamide: step 1/1. The polypeptide is Bifunctional purine biosynthesis protein PurH (Aliivibrio salmonicida (strain LFI1238) (Vibrio salmonicida (strain LFI1238))).